Reading from the N-terminus, the 364-residue chain is 4-hydroxythreonine-4-phosphate dehydrogenase (364 aa).

His148 and Thr149 together coordinate substrate. A divalent metal cation-binding residues include His177, His216, and His301. Lys309, Asn318, and Arg327 together coordinate substrate.

The protein belongs to the PdxA family. In terms of assembly, homodimer. The cofactor is Zn(2+). Requires Mg(2+) as cofactor. Co(2+) serves as cofactor.

The protein resides in the cytoplasm. The catalysed reaction is 4-(phosphooxy)-L-threonine + NAD(+) = 3-amino-2-oxopropyl phosphate + CO2 + NADH. It functions in the pathway cofactor biosynthesis; pyridoxine 5'-phosphate biosynthesis; pyridoxine 5'-phosphate from D-erythrose 4-phosphate: step 4/5. In terms of biological role, catalyzes the NAD(P)-dependent oxidation of 4-(phosphooxy)-L-threonine (HTP) into 2-amino-3-oxo-4-(phosphooxy)butyric acid which spontaneously decarboxylates to form 3-amino-2-oxopropyl phosphate (AHAP). The polypeptide is 4-hydroxythreonine-4-phosphate dehydrogenase (Campylobacter jejuni (strain RM1221)).